We begin with the raw amino-acid sequence, 136 residues long: Large ribosomal subunit protein bL12 (136 aa).

Belongs to the bacterial ribosomal protein bL12 family. As to quaternary structure, homodimer. Part of the ribosomal stalk of the 50S ribosomal subunit. Forms a multimeric L10(L12)X complex, where L10 forms an elongated spine to which 2 to 4 L12 dimers bind in a sequential fashion. Binds GTP-bound translation factors.

Its function is as follows. Forms part of the ribosomal stalk which helps the ribosome interact with GTP-bound translation factors. Is thus essential for accurate translation. The chain is Large ribosomal subunit protein bL12 from Synechococcus sp. (strain JA-2-3B'a(2-13)) (Cyanobacteria bacterium Yellowstone B-Prime).